Here is a 483-residue protein sequence, read N- to C-terminus: NADH-quinone oxidoreductase subunit N (483 aa).

13 consecutive transmembrane segments (helical) span residues 13-33 (PALP…YGVF), 45-65 (GALA…NAYV), 80-100 (FMKL…LTFI), 111-131 (PVLI…NGLI), 165-185 (FVLG…IYGF), 205-225 (IGVI…ISAV), 244-264 (AFFA…VLFV), 276-296 (IIVF…IGQS), 301-321 (LMAY…AAGT), 328-348 (VLIY…CILA), 373-393 (AFMM…AGFF), 407-429 (LYPL…LRIV), and 452-472 (VLGI…PLIL).

It belongs to the complex I subunit 2 family. In terms of assembly, NDH-1 is composed of 14 different subunits. Subunits NuoA, H, J, K, L, M, N constitute the membrane sector of the complex.

Its subcellular location is the cell inner membrane. The enzyme catalyses a quinone + NADH + 5 H(+)(in) = a quinol + NAD(+) + 4 H(+)(out). NDH-1 shuttles electrons from NADH, via FMN and iron-sulfur (Fe-S) centers, to quinones in the respiratory chain. The immediate electron acceptor for the enzyme in this species is believed to be ubiquinone. Couples the redox reaction to proton translocation (for every two electrons transferred, four hydrogen ions are translocated across the cytoplasmic membrane), and thus conserves the redox energy in a proton gradient. The sequence is that of NADH-quinone oxidoreductase subunit N from Parvibaculum lavamentivorans (strain DS-1 / DSM 13023 / NCIMB 13966).